Here is a 132-residue protein sequence, read N- to C-terminus: AP-2 complex subunit sigma (132 aa).

Belongs to the adaptor complexes small subunit family. In terms of assembly, adaptor protein complex 2 (AP-2) is a heterotetramer composed of two large adaptins (alpha-type and beta-type subunits), a medium adaptin (mu-type subunit AP50) and a small adaptin (sigma-type subunit AP17). Widely expressed in the embryo, endosperm, leaf and root.

The protein localises to the cell membrane. It is found in the membrane. It localises to the coated pit. Its function is as follows. Component of the adaptor complexes which link clathrin to receptors in coated vesicles. Clathrin-associated protein complexes are believed to interact with the cytoplasmic tails of membrane proteins, leading to their selection and concentration. AP2S1/AP17 is a subunit of the plasma membrane adaptor. The complex binds polyphosphoinositides. The chain is AP-2 complex subunit sigma (AP-17) from Zea mays (Maize).